Here is a 267-residue protein sequence, read N- to C-terminus: Small ribosomal subunit protein uS3 (267 aa).

One can recognise a KH type-2 domain in the interval 43 to 111; sequence IRKEMSKDLE…QVQLNIFEVK (69 aa). Residues 216–267 are disordered; the sequence is FEEQQAQQNNRPGRRGGDRRPRRGNRSAAPQAAEAPKAEAPAEAAPAAETKE. Over residues 241–267 the composition is skewed to low complexity; the sequence is RSAAPQAAEAPKAEAPAEAAPAAETKE.

The protein belongs to the universal ribosomal protein uS3 family. As to quaternary structure, part of the 30S ribosomal subunit. Forms a tight complex with proteins S10 and S14.

Its function is as follows. Binds the lower part of the 30S subunit head. Binds mRNA in the 70S ribosome, positioning it for translation. In Bifidobacterium longum subsp. infantis (strain ATCC 15697 / DSM 20088 / JCM 1222 / NCTC 11817 / S12), this protein is Small ribosomal subunit protein uS3.